The following is a 311-amino-acid chain: Ribosomal RNA small subunit methyltransferase H (311 aa).

Residues 32-34, aspartate 52, phenylalanine 79, aspartate 100, and glutamine 107 contribute to the S-adenosyl-L-methionine site; that span reads AGH.

It belongs to the methyltransferase superfamily. RsmH family.

It localises to the cytoplasm. The enzyme catalyses cytidine(1402) in 16S rRNA + S-adenosyl-L-methionine = N(4)-methylcytidine(1402) in 16S rRNA + S-adenosyl-L-homocysteine + H(+). In terms of biological role, specifically methylates the N4 position of cytidine in position 1402 (C1402) of 16S rRNA. This Staphylococcus haemolyticus (strain JCSC1435) protein is Ribosomal RNA small subunit methyltransferase H.